The primary structure comprises 178 residues: Large ribosomal subunit protein uL5 (178 aa).

The protein belongs to the universal ribosomal protein uL5 family. As to quaternary structure, part of the 50S ribosomal subunit; part of the 5S rRNA/L5/L18/L25 subcomplex. Contacts the 5S rRNA and the P site tRNA. Forms a bridge to the 30S subunit in the 70S ribosome.

This is one of the proteins that bind and probably mediate the attachment of the 5S RNA into the large ribosomal subunit, where it forms part of the central protuberance. In the 70S ribosome it contacts protein S13 of the 30S subunit (bridge B1b), connecting the 2 subunits; this bridge is implicated in subunit movement. Contacts the P site tRNA; the 5S rRNA and some of its associated proteins might help stabilize positioning of ribosome-bound tRNAs. This chain is Large ribosomal subunit protein uL5, found in Aliivibrio fischeri (strain ATCC 700601 / ES114) (Vibrio fischeri).